Consider the following 417-residue polypeptide: NADH-quinone oxidoreductase subunit D (417 aa).

The protein belongs to the complex I 49 kDa subunit family. NDH-1 is composed of 14 different subunits. Subunits NuoB, C, D, E, F, and G constitute the peripheral sector of the complex.

It localises to the cell inner membrane. It catalyses the reaction a quinone + NADH + 5 H(+)(in) = a quinol + NAD(+) + 4 H(+)(out). Functionally, NDH-1 shuttles electrons from NADH, via FMN and iron-sulfur (Fe-S) centers, to quinones in the respiratory chain. The immediate electron acceptor for the enzyme in this species is believed to be ubiquinone. Couples the redox reaction to proton translocation (for every two electrons transferred, four hydrogen ions are translocated across the cytoplasmic membrane), and thus conserves the redox energy in a proton gradient. In Polaromonas sp. (strain JS666 / ATCC BAA-500), this protein is NADH-quinone oxidoreductase subunit D.